The sequence spans 212 residues: Probable nicotinate-nucleotide adenylyltransferase (212 aa).

Belongs to the NadD family.

The catalysed reaction is nicotinate beta-D-ribonucleotide + ATP + H(+) = deamido-NAD(+) + diphosphate. The protein operates within cofactor biosynthesis; NAD(+) biosynthesis; deamido-NAD(+) from nicotinate D-ribonucleotide: step 1/1. Functionally, catalyzes the reversible adenylation of nicotinate mononucleotide (NaMN) to nicotinic acid adenine dinucleotide (NaAD). In Chromobacterium violaceum (strain ATCC 12472 / DSM 30191 / JCM 1249 / CCUG 213 / NBRC 12614 / NCIMB 9131 / NCTC 9757 / MK), this protein is Probable nicotinate-nucleotide adenylyltransferase.